We begin with the raw amino-acid sequence, 925 residues long: Aspulvinone E synthetase melA (925 aa).

Residues 11 to 434 (ETAAARNGDG…GGRAKETIII (424 aa)) form an adenylation (A) domain region. Residues 564–644 (SPKNDFEKGL…ELAAALDNLY (81 aa)) form the Carrier domain. The residue at position 601 (Ser-601) is an O-(pantetheine 4'-phosphoryl)serine. The segment at 663-923 (PLWLVHPGAG…KILRSALAER (261 aa)) is thioesterase (TE) domain.

It belongs to the NRP synthetase family.

The protein localises to the cytoplasm. It carries out the reaction 2 3-(4-hydroxyphenyl)pyruvate + AH2 + 2 ATP + O2 = aspulvinone E + A + 2 AMP + CO2 + 2 diphosphate + H2O + H(+). Nonribosomal peptide synthase; part of the gene cluster that mediates the biosynthesis of Asp-melanin, a pigment that confers resistance against UV light and hampers phagocytosis by soil amoeba. The nonribosomal peptide synthase melA converts 4-hydroxyphenylpyruvate (4-HPPA) to aspulvinone E. The tyrosinase tyrP then performs hydroxylations of both aromatic moieties of aspulvinone E. The product of tyrP is highly unstable, and, due to the high reactivity of methides and ortho-diquinones, the polymeric Asp-melanin forms spontaneously. The protein is Aspulvinone E synthetase melA of Aspergillus terreus (strain NIH 2624 / FGSC A1156).